Here is a 1826-residue protein sequence, read N- to C-terminus: 1,3-beta-glucan synthase component bgs3 (1826 aa).

A compositionally biased stretch (polar residues) spans 34 to 43; sequence QSNDQYNNIQ. A disordered region spans residues 34–90; the sequence is QSNDQYNNIQHPAPSFANPFIHEQDDSYSDILEEEPDEDAYDSPERPSSTEEFISQD. Over residues 59-75 the composition is skewed to acidic residues; it reads DSYSDILEEEPDEDAYD. 7 helical membrane passes run 427-447, 465-485, 504-524, 543-563, 597-617, 637-657, and 660-680; these read IWILHISVFWYFTVYNSPTIY, WCAPALAGAVASFISFLALIL, LIFVSILIALNIVPAAFIFGF, FFFSIGCVAYQSFIPLPFLLG, AALWITVFIAKFVESYYFLTL, FMIGASLCSHQPKFLLSLVYL, and LVLFFLDTYLWYMLISTMFSI. The residue at position 885 (Ser-885) is a Phosphoserine. A run of 11 helical transmembrane segments spans residues 1272 to 1292, 1329 to 1349, 1375 to 1397, 1417 to 1437, 1438 to 1458, 1531 to 1551, 1571 to 1591, 1607 to 1627, 1642 to 1662, 1701 to 1721, and 1770 to 1790; these read VFIMISMQLLMLVFVNLGAMY, IISIFIVFFISFLPLVVHDLL, VTQNYANSIFTNLTYGGARYIAT, GSSIYLGSRLIMMLLFGTMTV, WTTHYVYFWVTMFALVICPFI, IFTEVFLPACFAFFTICAYTF, IWIMAALPIAISTAALLILLM, YGAVLAALAHAVSVFGLVFTF, VLGCIVIFAIHRLVFKLVVVF, CKVVEMNLFAMDFILSHCILF, and SLLFFALLCTFVAMIVVPLVL.

This sequence belongs to the glycosyltransferase 48 family. As to quaternary structure, component of the 1,3-beta-glucan synthase (GS) complex, composed of at least the alternate catalytic subunits bgs1, bgs2, bgs3, and bgs4, and a regulatory subunit chr4.

Its subcellular location is the membrane. It catalyses the reaction [(1-&gt;3)-beta-D-glucosyl](n) + UDP-alpha-D-glucose = [(1-&gt;3)-beta-D-glucosyl](n+1) + UDP + H(+). In terms of biological role, alternate catalytic subunit of the 1,3-beta-glucan synthase (GS) complex. Synthesizes 1,3-beta-glucan, a major structural component of the yeast cell wall. Required for cell wall biosynthesis and cell elongation. The chain is 1,3-beta-glucan synthase component bgs3 from Schizosaccharomyces pombe (strain 972 / ATCC 24843) (Fission yeast).